A 185-amino-acid polypeptide reads, in one-letter code: Ribosome-recycling factor (185 aa).

Belongs to the RRF family.

It localises to the cytoplasm. In terms of biological role, responsible for the release of ribosomes from messenger RNA at the termination of protein biosynthesis. May increase the efficiency of translation by recycling ribosomes from one round of translation to another. The sequence is that of Ribosome-recycling factor from Streptococcus mutans serotype c (strain ATCC 700610 / UA159).